We begin with the raw amino-acid sequence, 118 residues long: Protein TusC (118 aa).

The protein belongs to the DsrF/TusC family. As to quaternary structure, heterohexamer, formed by a dimer of trimers. The hexameric TusBCD complex contains 2 copies each of TusB, TusC and TusD. The TusBCD complex interacts with TusE.

Its subcellular location is the cytoplasm. Part of a sulfur-relay system required for 2-thiolation of 5-methylaminomethyl-2-thiouridine (mnm(5)s(2)U) at tRNA wobble positions. This chain is Protein TusC, found in Salmonella paratyphi C (strain RKS4594).